We begin with the raw amino-acid sequence, 260 residues long: Phosphate import ATP-binding protein PstB 1 (260 aa).

One can recognise an ABC transporter domain in the interval 8 to 255 (TETKNVYDVL…PEHKRTEDYV (248 aa)). 46–53 (GPSGCGKS) lines the ATP pocket.

It belongs to the ABC transporter superfamily. Phosphate importer (TC 3.A.1.7) family. The complex is composed of two ATP-binding proteins (PstB), two transmembrane proteins (PstC and PstA) and a solute-binding protein (PstS).

The protein localises to the cell membrane. It catalyses the reaction phosphate(out) + ATP + H2O = ADP + 2 phosphate(in) + H(+). Part of the ABC transporter complex PstSACB involved in phosphate import. Responsible for energy coupling to the transport system. This Shouchella clausii (strain KSM-K16) (Alkalihalobacillus clausii) protein is Phosphate import ATP-binding protein PstB 1.